The chain runs to 390 residues: Trehalose-phosphate phosphatase (390 aa).

Catalysis depends on D150, which acts as the Nucleophile. Mg(2+)-binding residues include D150, D152, and D333. 150-152 (DFD) is a substrate binding site.

It belongs to the trehalose phosphatase family. The cofactor is Mg(2+).

It carries out the reaction alpha,alpha-trehalose 6-phosphate + H2O = alpha,alpha-trehalose + phosphate. It participates in glycan biosynthesis; trehalose biosynthesis. In terms of biological role, removes the phosphate from trehalose 6-phosphate to produce free trehalose. This Mycobacterium marinum (strain ATCC BAA-535 / M) protein is Trehalose-phosphate phosphatase (otsB).